The sequence spans 338 residues: Lipoate-protein ligase A (338 aa).

Residues 29–216 (PATQRVLFLW…AFFAHYGERV (188 aa)) form the BPL/LPL catalytic domain. Residues Arg-71, 76–79 (GAVF), and Lys-134 contribute to the ATP site. Lys-134 is a binding site for (R)-lipoate.

Belongs to the LplA family. Monomer.

The protein localises to the cytoplasm. The catalysed reaction is L-lysyl-[lipoyl-carrier protein] + (R)-lipoate + ATP = N(6)-[(R)-lipoyl]-L-lysyl-[lipoyl-carrier protein] + AMP + diphosphate + H(+). It participates in protein modification; protein lipoylation via exogenous pathway; protein N(6)-(lipoyl)lysine from lipoate: step 1/2. Its pathway is protein modification; protein lipoylation via exogenous pathway; protein N(6)-(lipoyl)lysine from lipoate: step 2/2. Functionally, catalyzes both the ATP-dependent activation of exogenously supplied lipoate to lipoyl-AMP and the transfer of the activated lipoyl onto the lipoyl domains of lipoate-dependent enzymes. The polypeptide is Lipoate-protein ligase A (Shigella boydii serotype 18 (strain CDC 3083-94 / BS512)).